The following is a 543-amino-acid chain: CTP synthase (543 aa).

Residues 1–267 (MAKFVFVTGG…CREVLDVLNL (267 aa)) form an amidoligase domain region. Ser-13 is a binding site for CTP. Residue Ser-13 participates in UTP binding. 14–19 (SIGKGI) contributes to the ATP binding site. Tyr-54 contacts L-glutamine. Position 71 (Asp-71) interacts with ATP. Mg(2+) is bound by residues Asp-71 and Glu-141. CTP contacts are provided by residues 148-150 (DIE), 188-193 (KTKPTQ), and Lys-224. Residues 188–193 (KTKPTQ) and Lys-224 each bind UTP. A Glutamine amidotransferase type-1 domain is found at 292 to 534 (KVALVGKYVQ…IEAAQQRLPN (243 aa)). Position 354 (Gly-354) interacts with L-glutamine. Cys-381 (nucleophile; for glutamine hydrolysis) is an active-site residue. L-glutamine is bound by residues 382-385 (LGMQ), Glu-405, and Arg-462. Catalysis depends on residues His-507 and Glu-509.

This sequence belongs to the CTP synthase family. As to quaternary structure, homotetramer.

The enzyme catalyses UTP + L-glutamine + ATP + H2O = CTP + L-glutamate + ADP + phosphate + 2 H(+). It carries out the reaction L-glutamine + H2O = L-glutamate + NH4(+). The catalysed reaction is UTP + NH4(+) + ATP = CTP + ADP + phosphate + 2 H(+). It functions in the pathway pyrimidine metabolism; CTP biosynthesis via de novo pathway; CTP from UDP: step 2/2. Allosterically activated by GTP, when glutamine is the substrate; GTP has no effect on the reaction when ammonia is the substrate. The allosteric effector GTP functions by stabilizing the protein conformation that binds the tetrahedral intermediate(s) formed during glutamine hydrolysis. Inhibited by the product CTP, via allosteric rather than competitive inhibition. Catalyzes the ATP-dependent amination of UTP to CTP with either L-glutamine or ammonia as the source of nitrogen. Regulates intracellular CTP levels through interactions with the four ribonucleotide triphosphates. This Synechococcus sp. (strain WH7803) protein is CTP synthase.